The chain runs to 428 residues: Phosphoribosylamine--glycine ligase (428 aa).

The region spanning 107–313 (KQVMKTYNIP…LVNVIESLLD (207 aa)) is the ATP-grasp domain. 133–194 (VEAEGVPIVI…EEYLEGEELS (62 aa)) is an ATP binding site. The Mg(2+) site is built by Glu-283 and Asn-285.

The protein belongs to the GARS family. It depends on Mg(2+) as a cofactor. Mn(2+) serves as cofactor.

The catalysed reaction is 5-phospho-beta-D-ribosylamine + glycine + ATP = N(1)-(5-phospho-beta-D-ribosyl)glycinamide + ADP + phosphate + H(+). It functions in the pathway purine metabolism; IMP biosynthesis via de novo pathway; N(1)-(5-phospho-D-ribosyl)glycinamide from 5-phospho-alpha-D-ribose 1-diphosphate: step 2/2. This is Phosphoribosylamine--glycine ligase from Halalkalibacterium halodurans (strain ATCC BAA-125 / DSM 18197 / FERM 7344 / JCM 9153 / C-125) (Bacillus halodurans).